The sequence spans 848 residues: Probable serine/threonine-protein kinase DDB_G0278535 (848 aa).

3 stretches are compositionally biased toward low complexity: residues methionine 1 to histidine 52, threonine 60 to threonine 85, and threonine 95 to serine 116. The interval methionine 1–valine 117 is disordered. ANK repeat units lie at residues methionine 181 to isoleucine 212, serine 218 to isoleucine 248, aspartate 252 to alanine 285, asparagine 289 to valine 320, and arginine 324 to isoleucine 353. The region spanning lysine 378–glutamine 441 is the SAM domain. The segment at asparagine 448 to asparagine 478 is disordered. Positions threonine 452–serine 472 are enriched in low complexity. Positions leucine 529 to methionine 799 constitute a Protein kinase domain. ATP is bound by residues leucine 535–valine 543 and lysine 556. Aspartate 650 (proton acceptor) is an active-site residue. The interval arginine 810 to threonine 848 is disordered. Over residues threonine 822 to threonine 848 the composition is skewed to low complexity.

This sequence belongs to the protein kinase superfamily. TKL Ser/Thr protein kinase family.

The catalysed reaction is L-seryl-[protein] + ATP = O-phospho-L-seryl-[protein] + ADP + H(+). It carries out the reaction L-threonyl-[protein] + ATP = O-phospho-L-threonyl-[protein] + ADP + H(+). This chain is Probable serine/threonine-protein kinase DDB_G0278535, found in Dictyostelium discoideum (Social amoeba).